The primary structure comprises 518 residues: E3 ubiquitin-protein ligase TRIM39 (518 aa).

An RING-type zinc finger spans residues 29-70 (CSVCLEYLKEPVIIECGHNFCKACITRWWEDLERDFPCPVCR). Residues 102–143 (RDESLCPQHHEALSLFCYEDQEAVCLICAISHTHRAHTVVPL) form a B box-type zinc finger. The Zn(2+) site is built by Cys-107, His-110, Cys-129, and His-135. Residues 181 to 250 (ELKRLVESRR…AHLAAEVEGK (70 aa)) adopt a coiled-coil conformation. Interaction with CDKN1A stretches follow at residues 268–337 (KNIP…QLIA) and 389–518 (TSGR…TDWE). The 196-residue stretch at 319–514 (SNFPRQYFAL…NAAPLTIRPP (196 aa)) folds into the B30.2/SPRY domain.

It belongs to the TRIM/RBCC family. In terms of assembly, isoform 1 interacts with MOAP1. Isoform 1 and isoform 2 interact with CDKN1A. Isoform 2 interacts (via domain B box-type) with CACTIN. Autoubiquitinated. As to expression, ubiquitous; highly expressed in brain, heart, kidney, liver, skeletal muscle, spleen and testis.

It is found in the cytoplasm. Its subcellular location is the cytosol. It localises to the mitochondrion. The protein resides in the nucleus. The catalysed reaction is S-ubiquitinyl-[E2 ubiquitin-conjugating enzyme]-L-cysteine + [acceptor protein]-L-lysine = [E2 ubiquitin-conjugating enzyme]-L-cysteine + N(6)-ubiquitinyl-[acceptor protein]-L-lysine.. It participates in protein modification; protein ubiquitination. E3 ubiquitin-protein ligase. May facilitate apoptosis by inhibiting APC/C-Cdh1-mediated poly-ubiquitination and subsequent proteasome-mediated degradation of the pro-apoptotic protein MOAP1. Regulates the G1/S transition of the cell cycle and DNA damage-induced G2 arrest by stabilizing CDKN1A/p21. Positively regulates CDKN1A/p21 stability by competing with DTL for CDKN1A/p21 binding, therefore disrupting DCX(DTL) E3 ubiquitin ligase complex-mediated CDKN1A/p21 ubiquitination and degradation. Functionally, regulates the G1/S transition of the cell cycle and DNA damage-induced G2 arrest by stabilizing CDKN1A/p21. Positively regulates CDKN1A/p21 stability by competing with DTL for CDKN1A/p21 binding, therefore disrupting DCX(DTL) E3 ubiquitin ligase complex-mediated CDKN1A/p21 ubiquitination and degradation. Negatively regulates the canonical NF-kappa-B signaling pathway via stabilization of CACTIN in an ubiquitination-independent manner. The protein is E3 ubiquitin-protein ligase TRIM39 (TRIM39) of Homo sapiens (Human).